The chain runs to 162 residues: AP-1 complex subunit sigma-1 (162 aa).

It belongs to the adaptor complexes small subunit family. Adaptor protein complex 1 (AP-1) is a heterotetramer composed of two large adaptins (gamma-type subunit apl4 and beta-type subunit apl2), a medium adaptin (mu-type subunit apm1) and a small adaptin (sigma-type subunit aps1). AP-1 interacts with clathrin.

Its subcellular location is the cytoplasm. It localises to the nucleus. The protein resides in the cytoplasmic vesicle. The protein localises to the clathrin-coated vesicle membrane. It is found in the endosome. Its subcellular location is the golgi apparatus. Its function is as follows. Component of the AP-1 complex which links clathrin to receptors in coated vesicles. Clathrin-associated protein complexes are believed to interact with the cytoplasmic tails of membrane proteins, leading to their selection and concentration. The sequence is that of AP-1 complex subunit sigma-1 (vas2) from Schizosaccharomyces pombe (strain 972 / ATCC 24843) (Fission yeast).